We begin with the raw amino-acid sequence, 604 residues long: MTDVSVSKIRNFCIIAHIDHGKSTLADRLLQETGTVQAREMKEQFLDNMELERERGITIKLQAARMNYRAQDGEQYVLNLIDTPGHVDFSYEVSRSLQACEGALLVVDASQGVEAQTLANVYLALENDLEIIPVLNKIDLPGADPERVKREIEEVIGLDCSGAIEASAKSGIGIGEILESIVHLVPPPSDTTGEPLRALIFDSYYDPYRGVIVYFRVIDGTVRKGDRIRLMASGKEYEIDELGVLSPNQVQVEELHAGEVGYIAASIKAVADARVGDTITLARARATEPLPGYVEAKPMVFCGLFPTDSDRYPDLRDALEKLQLSDAALQYEPETSSAMGFGFRCGFLGLLHMEIVQERLEREYNLDLITTAPSVVYQVTTLDGEVLRVDNPSKLPPPQQREKIEEPYVKVEIITPENYVGALMDLCQTRRGIFIDMKYLTQERTTLIYEMPLAEVVTDFFDQMKSRTKGYASMEYSLIGYREGELVRMDILINSEPVDPLATIVHRDKAYYVGKALVEKLKELIPRHQFKIPLQAAIGSRVIASESIPALRKDVLAKCYGGDISRKKKLLQKQAKGKKRMKAIGTVDVPQEAFMAVLKLDREG.

Residues S7 to S189 enclose the tr-type G domain. GTP contacts are provided by residues D19–T24 and N136–D139.

Belongs to the TRAFAC class translation factor GTPase superfamily. Classic translation factor GTPase family. LepA subfamily.

It localises to the cell inner membrane. It catalyses the reaction GTP + H2O = GDP + phosphate + H(+). In terms of biological role, required for accurate and efficient protein synthesis under certain stress conditions. May act as a fidelity factor of the translation reaction, by catalyzing a one-codon backward translocation of tRNAs on improperly translocated ribosomes. Back-translocation proceeds from a post-translocation (POST) complex to a pre-translocation (PRE) complex, thus giving elongation factor G a second chance to translocate the tRNAs correctly. Binds to ribosomes in a GTP-dependent manner. The chain is Elongation factor 4 from Synechococcus elongatus (strain ATCC 33912 / PCC 7942 / FACHB-805) (Anacystis nidulans R2).